The chain runs to 279 residues: MTKQIIVTDSTSDLSKEYLEANNIHVIPLSLTIEGASYVDQVDITSEEFINHIENDEDVKTSQPAIGEFISAYEELGKDGSEIISIHLSSGLSGTFNTAYQASQMVDANVTVIDSKSISFGLGYQIQHLVELVKEGVSTSEIVKKLNHLRENIKLFVVIGQLNQLIKGGRISKTKGLIGNLMKIKPIGTLDDGRLELVHNARTQNSSIQYLKKEIAEFIGDHEIKSVGVAHANVIEYVDKLKKVFNEAFHVDNYDINVTTPVISAHTGQGAIGLVVLKK.

The 275-residue stretch at 4 to 278 folds into the DegV domain; the sequence is QIIVTDSTSD…QGAIGLVVLK (275 aa). Residues T61 and S93 each contribute to the hexadecanoate site.

May bind long-chain fatty acids, such as palmitate, and may play a role in lipid transport or fatty acid metabolism. This Staphylococcus aureus (strain MRSA252) protein is DegV domain-containing protein SAR1438.